The primary structure comprises 1044 residues: Unconventional myosin-Ic (1044 aa).

The Myosin motor domain maps to Gly28–Glu712. ATP-binding positions include Asn69, Tyr77, Ser120–Glu129, and Asn173–Ser177. Lys364 is modified (N6-methyllysine). Ser389 carries the post-translational modification Phosphoserine. Residue Lys467 is modified to N6-acetyllysine. Ser517 bears the Phosphoserine mark. Residues Leu589–Asp611 are actin-binding. IQ domains are found at residues Arg715 to Cys744 and Val738 to Thr767. Ser845 and Ser1022 each carry phosphoserine. A TH1 domain is found at Lys866 to Arg1040.

This sequence belongs to the TRAFAC class myosin-kinesin ATPase superfamily. Myosin family. As to quaternary structure, interacts (via its IQ motifs) with CABP1 and CIB1; the interaction with CABP1 and CIB1 is calcium-dependent. Interacts (via tail domain) with PLEKHB1 (via PH domain); the interaction is not affected by the presence or absence of calcium and CALM. Interacts with POLR1A. Interacts with POLR2A. Component of the B-WICH complex, at least composed of SMARCA5/SNF2H, BAZ1B/WSTF, SF3B1, DEK, MYO1C, ERCC6, MYBBP1A and DDX21. Interacts (via its IQ motifs) with CALM; this precludes interaction with YWHAB. Interacts with YWHAB; this precludes interaction with CALM. Interacts with RPS6. Interacts with actin. Interacts with LLPH. Interacts with GLUT4. Interacts (via its IQ motifs) with SH3BGRL3; the interaction is dependent on calcium and takes place at membrane ruffles.

Its subcellular location is the cytoplasm. The protein resides in the nucleus. It is found in the cell cortex. It localises to the cell projection. The protein localises to the stereocilium membrane. Its subcellular location is the cytoplasmic vesicle. The protein resides in the ruffle membrane. Functionally, myosins are actin-based motor molecules with ATPase activity. Unconventional myosins serve in intracellular movements. Their highly divergent tails are presumed to bind to membranous compartments, which would be moved relative to actin filaments. Involved in glucose transporter recycling in response to insulin by regulating movement of intracellular GLUT4-containing vesicles to the plasma membrane. Component of the hair cell's (the sensory cells of the inner ear) adaptation-motor complex. Acts as a mediator of adaptation of mechanoelectrical transduction in stereocilia of vestibular hair cells. Binds phosphoinositides and links the actin cytoskeleton to cellular membranes. This chain is Unconventional myosin-Ic (Myo1c), found in Rattus norvegicus (Rat).